Here is a 179-residue protein sequence, read N- to C-terminus: NADH-quinone oxidoreductase subunit B (179 aa).

4 residues coordinate [4Fe-4S] cluster: Cys-52, Cys-53, Cys-117, and Cys-147.

Belongs to the complex I 20 kDa subunit family. In terms of assembly, NDH-1 is composed of 14 different subunits. Subunits NuoB, C, D, E, F, and G constitute the peripheral sector of the complex. [4Fe-4S] cluster is required as a cofactor.

It is found in the cell inner membrane. It catalyses the reaction a quinone + NADH + 5 H(+)(in) = a quinol + NAD(+) + 4 H(+)(out). In terms of biological role, NDH-1 shuttles electrons from NADH, via FMN and iron-sulfur (Fe-S) centers, to quinones in the respiratory chain. The immediate electron acceptor for the enzyme in this species is believed to be ubiquinone. Couples the redox reaction to proton translocation (for every two electrons transferred, four hydrogen ions are translocated across the cytoplasmic membrane), and thus conserves the redox energy in a proton gradient. This Ehrlichia chaffeensis (strain ATCC CRL-10679 / Arkansas) protein is NADH-quinone oxidoreductase subunit B.